The sequence spans 335 residues: Galactosylgalactosylxylosylprotein 3-beta-glucuronosyltransferase 3 (335 aa).

Residues 1–7 (MKLKLKN) lie on the Cytoplasmic side of the membrane. A helical; Signal-anchor for type II membrane protein membrane pass occupies residues 8-28 (VFLAYFLVSIAGLLYALVQLG). Residues 29-335 (QPCDCLPPLR…GQGSDPAIEV (307 aa)) are Lumenal-facing. D196 is a Mn(2+) binding site. The Proton acceptor role is filled by E281. N300 is a glycosylation site (N-linked (GlcNAc...) asparagine). Basic and acidic residues predominate over residues 312 to 322 (EKPKMKQEEQL). Positions 312–335 (EKPKMKQEEQLQRQGQGSDPAIEV) are disordered.

This sequence belongs to the glycosyltransferase 43 family. Homodimer; disulfide-linked. Interacts with PXYLP1; the interaction increases the 2-phosphoxylose phosphatase activity of PXYLP1 during completion of linkage region formation in a B3GAT3-mediated manner. Mn(2+) serves as cofactor. N-glycosylated. Liver, brain and heart. Moderate expression seen in lung, skeletal muscle, kidney and testis.

It localises to the golgi apparatus membrane. The protein resides in the golgi apparatus. The protein localises to the cis-Golgi network. It catalyses the reaction 3-O-(beta-D-galactosyl-(1-&gt;3)-beta-D-galactosyl-(1-&gt;4)-beta-D-xylosyl)-L-seryl-[protein] + UDP-alpha-D-glucuronate = 3-O-(beta-D-GlcA-(1-&gt;3)-beta-D-Gal-(1-&gt;3)-beta-D-Gal-(1-&gt;4)-beta-D-Xyl)-L-seryl-[protein] + UDP + H(+). It participates in protein modification; protein glycosylation. Functionally, glycosaminoglycans biosynthesis. Involved in forming the linkage tetrasaccharide present in heparan sulfate and chondroitin sulfate. Transfers a glucuronic acid moiety from the uridine diphosphate-glucuronic acid (UDP-GlcUA) to the common linkage region trisaccharide Gal-beta-1,3-Gal-beta-1,4-Xyl covalently bound to a Ser residue at the glycosaminylglycan attachment site of proteoglycans. Can also play a role in the biosynthesis of l2/HNK-1 carbohydrate epitope on glycoproteins. Highest activity seen with Gal-beta-1,3-Gal-beta-O-R (where R=naphthalenemethanol or benzyl alcohol). Stimulates 2-phosphoxylose phosphatase activity of PXYLP1 in presence of uridine diphosphate-glucuronic acid (UDP-GlcUA) during completion of linkage region formation. This Cricetulus griseus (Chinese hamster) protein is Galactosylgalactosylxylosylprotein 3-beta-glucuronosyltransferase 3 (B3GAT3).